The primary structure comprises 1755 residues: Periplakin (1755 aa).

Residues 1-11 are compositionally biased toward basic residues; sequence MHSLFRKRNKG. A disordered region spans residues 1 to 20; sequence MHSLFRKRNKGKYSPTVQTR. Phosphoserine is present on S14. 2 coiled-coil regions span residues 16-125 and 182-387; these read TVQT…KQMY and LAKD…QQVV. Spectrin repeat units lie at residues 214–315, 321–483, and 503–610; these read QDYM…SHLK, HQFH…HALQ, and RQLL…EKVD. One can recognise an SH3 domain in the interval 397–453; sequence LKPIPVEALCDFESDQGLISRGYSYTLQKNNGESWELTDSTGKKLAAPAVCFIIPPT. The residue at position 463 (S463) is a Phosphoserine. 2 coiled-coil regions span residues 611-819 and 883-1644; these read VANR…RNSH and LSSG…SVAV. Residues S885, S947, S1583, and S1656 each carry the phosphoserine modification. Residues 1556-1755 form an interacts with BFSP2 and VIM region; that stretch reads ELDFLREENH…ELAVLVSGQK (200 aa). Plectin repeat units follow at residues 1650 to 1684 and 1699 to 1734; these read ENHL…WKMF and VKGP…AAQY.

It belongs to the plakin or cytolinker family. As to quaternary structure, homodimer or a heterodimer with EVPL. Found in a complex composed of PPL (via C-terminal linker domain), BFSP1 and BFSP2 in the retinal lens. Within the complex interacts (via C-terminal linker domain) with BFSP2. Interacts with VIM. Binds to the PH domain of AKT1. Interacts with FCGR1A. May interact with PPHLN1. In terms of tissue distribution, expressed in the retinal lens (at protein level).

It is found in the cell junction. The protein localises to the desmosome. It localises to the cytoplasm. Its subcellular location is the cytoskeleton. The protein resides in the cell membrane. In terms of biological role, component of the cornified envelope of keratinocytes. May link the cornified envelope to desmosomes and intermediate filaments. May act as a localization signal in PKB/AKT-mediated signaling. The chain is Periplakin (Ppl) from Mus musculus (Mouse).